Consider the following 282-residue polypeptide: 3-hydroxyanthranilate 3,4-dioxygenase (282 aa).

The segment at 1–160 (MAMAINVKKW…SKQYKSGKPD (160 aa)) is domain A (catalytic). O2 is bound at residue R43. Fe cation is bound by residues H47, E53, and H91. Residue E53 coordinates substrate. R95 and E105 together coordinate substrate. The interval 161-177 (PDQPKAKMPFCLSTEQV) is linker. Residues 178-282 (MEPFSFQHWL…LSTSQVPLPM (105 aa)) are domain B.

Belongs to the 3-HAO family. Monomer. Fe(2+) serves as cofactor.

Its subcellular location is the cytoplasm. The protein localises to the cytosol. It carries out the reaction 3-hydroxyanthranilate + O2 = (2Z,4Z)-2-amino-3-carboxymuconate 6-semialdehyde. It functions in the pathway cofactor biosynthesis; NAD(+) biosynthesis; quinolinate from L-kynurenine: step 3/3. In terms of biological role, catalyzes the oxidative ring opening of 3-hydroxyanthranilate to 2-amino-3-carboxymuconate semialdehyde, which spontaneously cyclizes to quinolinate. This Xenopus laevis (African clawed frog) protein is 3-hydroxyanthranilate 3,4-dioxygenase (haao).